Here is a 322-residue protein sequence, read N- to C-terminus: Cytochrome f (322 aa).

Residues M1–S35 form the signal peptide. The heme site is built by Y38, C58, C61, and H62. The chain crosses the membrane as a helical span at residues V288–K308.

It belongs to the cytochrome f family. In terms of assembly, the 4 large subunits of the cytochrome b6-f complex are cytochrome b6, subunit IV (17 kDa polypeptide, petD), cytochrome f and the Rieske protein, while the 4 small subunits are PetG, PetL, PetM and PetN. The complex functions as a dimer. Heme is required as a cofactor.

The protein resides in the plastid. Its subcellular location is the chloroplast thylakoid membrane. Its function is as follows. Component of the cytochrome b6-f complex, which mediates electron transfer between photosystem II (PSII) and photosystem I (PSI), cyclic electron flow around PSI, and state transitions. The polypeptide is Cytochrome f (Aethionema cordifolium (Lebanon stonecress)).